The following is a 435-amino-acid chain: Light-independent protochlorophyllide reductase subunit N (435 aa).

C23, C48, and C108 together coordinate [4Fe-4S] cluster.

Belongs to the BchN/ChlN family. In terms of assembly, protochlorophyllide reductase is composed of three subunits; ChlL, ChlN and ChlB. Forms a heterotetramer of two ChlB and two ChlN subunits. [4Fe-4S] cluster serves as cofactor.

It is found in the plastid. Its subcellular location is the chloroplast. The catalysed reaction is chlorophyllide a + oxidized 2[4Fe-4S]-[ferredoxin] + 2 ADP + 2 phosphate = protochlorophyllide a + reduced 2[4Fe-4S]-[ferredoxin] + 2 ATP + 2 H2O. It participates in porphyrin-containing compound metabolism; chlorophyll biosynthesis (light-independent). In terms of biological role, component of the dark-operative protochlorophyllide reductase (DPOR) that uses Mg-ATP and reduced ferredoxin to reduce ring D of protochlorophyllide (Pchlide) to form chlorophyllide a (Chlide). This reaction is light-independent. The NB-protein (ChlN-ChlB) is the catalytic component of the complex. This Auxenochlorella protothecoides (Green microalga) protein is Light-independent protochlorophyllide reductase subunit N.